A 425-amino-acid polypeptide reads, in one-letter code: Sodium-dependent glucose transporter 1A (425 aa).

Transmembrane regions (helical) follow at residues 35 to 55 (LIFVGRATGFLSGTMIGGVLF), 61 to 81 (FFLLGASMVATAAGLYLIPFC), 84 to 104 (AVLLIITMSVFGASVGVVDTG), 123 to 143 (ALHFSFALGAFLAPLLAKLAW), 183 to 203 (WAYASIGTFILVVSVFLFGLF), 228 to 248 (ALLCLLFLFFFFYVGAEITYG), 271 to 291 (SIFWGTFAACRGLAIFFATFL), 294 to 314 (GTMIVLSNIGSLVSCFFLVLF), 320 to 340 (CLWIATSVYGASMAATFPSGI), 355 to 375 (AFFVIGSALGDMAIPAVIGIL), and 382 to 402 (LPVVLYTCLGSAIFTAILFPV).

Belongs to the major facilitator superfamily.

The protein resides in the apical cell membrane. Functionally, may function as a sodium-dependent glucose transporter. Potential channels for urea in the inner medulla of kidney. The polypeptide is Sodium-dependent glucose transporter 1A (Mus musculus (Mouse)).